Consider the following 224-residue polypeptide: UPF0502 protein Psyr_2419 (224 aa).

Belongs to the UPF0502 family.

The protein is UPF0502 protein Psyr_2419 of Pseudomonas syringae pv. syringae (strain B728a).